Reading from the N-terminus, the 110-residue chain is Large ribosomal subunit protein eL30 (110 aa).

This sequence belongs to the eukaryotic ribosomal protein eL30 family.

This chain is Large ribosomal subunit protein eL30 (rpl30e), found in Methanocaldococcus jannaschii (strain ATCC 43067 / DSM 2661 / JAL-1 / JCM 10045 / NBRC 100440) (Methanococcus jannaschii).